We begin with the raw amino-acid sequence, 151 residues long: Large ribosomal subunit protein bL9 (151 aa).

It belongs to the bacterial ribosomal protein bL9 family.

Binds to the 23S rRNA. This chain is Large ribosomal subunit protein bL9, found in Mycobacteroides abscessus (strain ATCC 19977 / DSM 44196 / CCUG 20993 / CIP 104536 / JCM 13569 / NCTC 13031 / TMC 1543 / L948) (Mycobacterium abscessus).